We begin with the raw amino-acid sequence, 392 residues long: Formate-dependent phosphoribosylglycinamide formyltransferase (392 aa).

N(1)-(5-phospho-beta-D-ribosyl)glycinamide is bound by residues 22–23 (EL) and E82. Residues R114, K155, 160–165 (SSGKGQ), 195–198 (EGVV), and E203 contribute to the ATP site. Residues 119–308 (RLAAEELGLP…EFALHVRAFL (190 aa)) enclose the ATP-grasp domain. 2 residues coordinate Mg(2+): E267 and E279. Residues D286, K355, and 362 to 363 (RR) contribute to the N(1)-(5-phospho-beta-D-ribosyl)glycinamide site.

It belongs to the PurK/PurT family. In terms of assembly, homodimer.

The enzyme catalyses N(1)-(5-phospho-beta-D-ribosyl)glycinamide + formate + ATP = N(2)-formyl-N(1)-(5-phospho-beta-D-ribosyl)glycinamide + ADP + phosphate + H(+). It participates in purine metabolism; IMP biosynthesis via de novo pathway; N(2)-formyl-N(1)-(5-phospho-D-ribosyl)glycinamide from N(1)-(5-phospho-D-ribosyl)glycinamide (formate route): step 1/1. Functionally, involved in the de novo purine biosynthesis. Catalyzes the transfer of formate to 5-phospho-ribosyl-glycinamide (GAR), producing 5-phospho-ribosyl-N-formylglycinamide (FGAR). Formate is provided by PurU via hydrolysis of 10-formyl-tetrahydrofolate. The polypeptide is Formate-dependent phosphoribosylglycinamide formyltransferase (Cronobacter sakazakii (strain ATCC BAA-894) (Enterobacter sakazakii)).